The following is a 426-amino-acid chain: Glutamate-1-semialdehyde 2,1-aminomutase (426 aa).

An N6-(pyridoxal phosphate)lysine modification is found at K265.

The protein belongs to the class-III pyridoxal-phosphate-dependent aminotransferase family. HemL subfamily. As to quaternary structure, homodimer. The cofactor is pyridoxal 5'-phosphate.

Its subcellular location is the cytoplasm. It catalyses the reaction (S)-4-amino-5-oxopentanoate = 5-aminolevulinate. It participates in porphyrin-containing compound metabolism; protoporphyrin-IX biosynthesis; 5-aminolevulinate from L-glutamyl-tRNA(Glu): step 2/2. In Alteromonas mediterranea (strain DSM 17117 / CIP 110805 / LMG 28347 / Deep ecotype), this protein is Glutamate-1-semialdehyde 2,1-aminomutase.